Reading from the N-terminus, the 522-residue chain is 2-isopropylmalate synthase (522 aa).

In terms of domain architecture, Pyruvate carboxyltransferase spans 5-267; it reads VIIFDTTLRD…ETGINAKEIH (263 aa). 4 residues coordinate Mn(2+): D14, H202, H204, and N238. Positions 392 to 522 are regulatory domain; that stretch reads QLQQLVVQSD…MHKNRELGGV (131 aa).

The protein belongs to the alpha-IPM synthase/homocitrate synthase family. LeuA type 1 subfamily. Homodimer. The cofactor is Mn(2+).

It localises to the cytoplasm. It carries out the reaction 3-methyl-2-oxobutanoate + acetyl-CoA + H2O = (2S)-2-isopropylmalate + CoA + H(+). The protein operates within amino-acid biosynthesis; L-leucine biosynthesis; L-leucine from 3-methyl-2-oxobutanoate: step 1/4. Catalyzes the condensation of the acetyl group of acetyl-CoA with 3-methyl-2-oxobutanoate (2-ketoisovalerate) to form 3-carboxy-3-hydroxy-4-methylpentanoate (2-isopropylmalate). In Shewanella sp. (strain ANA-3), this protein is 2-isopropylmalate synthase.